The chain runs to 371 residues: Probable F-box protein At1g65740 (371 aa).

Residues 2 to 49 enclose the F-box domain; the sequence is VDWSTLPEELLHFIAARSFSLVEYKRFSSICVSWHSSVSGVKKNPFHR.

The protein is Probable F-box protein At1g65740 of Arabidopsis thaliana (Mouse-ear cress).